Here is a 186-residue protein sequence, read N- to C-terminus: Cysteine protease inhibitor 10 (186 aa).

The signal sequence occupies residues 1–7 (TCHDDDN). 2 disulfide bridges follow: Cys-49-Cys-101 and Cys-149-Cys-155.

Belongs to the protease inhibitor I3 (leguminous Kunitz-type inhibitor) family.

The protein resides in the vacuole. Its function is as follows. Probable inhibitor of cysteine proteases. May protect the plant by inhibiting proteases of invading organisms. The polypeptide is Cysteine protease inhibitor 10 (Solanum tuberosum (Potato)).